Consider the following 315-residue polypeptide: Transcriptional regulator protein Pur-beta (315 aa).

Residues 1 to 39 form a disordered region; that stretch reads MADGDSGSERGGGGPGSFQPAPRGGGGPGGEQETQELAS. Ala-2 is modified (N-acetylalanine). Ser-6 and Ser-8 each carry phosphoserine. Arg-23 carries the post-translational modification Omega-N-methylarginine. The tract at residues 28–254 is DNA-binding; that stretch reads PGGEQETQEL…GVFLRVSEVK (227 aa). Thr-34 is modified (phosphothreonine). At Ser-104 the chain carries Phosphoserine. Arg-155 is subject to Omega-N-methylarginine. Positions 200–220 are disordered; that stretch reads DDELAGGPGGGAGGPGGGLYG. The segment covering 205–219 has biased composition (gly residues); that stretch reads GGPGGGAGGPGGGLY. The residue at position 270 (Lys-270) is an N6-acetyllysine. A compositionally biased stretch (basic and acidic residues) spans 288-298; that stretch reads RQRDKLYERRG. Residues 288 to 315 form a disordered region; that stretch reads RQRDKLYERRGGGSGGGDESEGEEVDED. Arg-297 carries the post-translational modification Omega-N-methylarginine. A phosphoserine mark is found at Ser-301 and Ser-307. A compositionally biased stretch (acidic residues) spans 305-315; that stretch reads DESEGEEVDED.

This sequence belongs to the PUR DNA-binding protein family. Homodimer, heterodimer with PURA and heterotrimer with PURA and YBX1/Y-box protein 1. Interacts with MYOCD and SRF. In terms of tissue distribution, expressed in muscle cells and in the liver.

The protein resides in the nucleus. Transcriptional regulator which can act as an activator or a repressor. Represses the transcription of ACTA2 in fibroblasts and smooth muscle cells via its ability to interact with the purine-rich strand of a MCAT- containing element in the 5' flanking region of the gene. Represses the transcription of MYOCD, capable of repressing all isoforms of MYOCD but the magnitude of the repressive effects is most notable for the SMC- specific isoforms. Promotes hepatic glucose production by activating the transcription of ADCY6, leading to cAMP accumulation, increased PKA activity, CREB activation, and increased transcription of PCK1 and G6PC genes. Has capacity to bind repeated elements in single-stranded DNA such as the purine-rich single strand of the PUR element located upstream of the MYC gene. Participates in transcriptional and translational regulation of alpha-MHC expression in cardiac myocytes by binding to the purine-rich negative regulatory (PNR) element. Modulates constitutive liver galectin-3 gene transcription by binding to its promoter. May play a role in the dendritic transport of a subset of mRNAs. In Rattus norvegicus (Rat), this protein is Transcriptional regulator protein Pur-beta (Purb).